We begin with the raw amino-acid sequence, 937 residues long: Translation initiation factor IF-2 (937 aa).

2 disordered regions span residues 61–156 (IQAN…KAKQ) and 171–274 (LTQS…SHKI). Basic and acidic residues predominate over residues 179–196 (AKKEISEVKKQEQEIKRH). Residues 197-208 (ENIKRRTGFRVI) show a composition bias toward basic residues. Residues 237–252 (EDIKKEWQEKDKQEAK) show a composition bias toward basic and acidic residues. The tr-type G domain occupies 436–605 (ERPPVVTIMG…LIQADIMELK (170 aa)). Residues 445 to 452 (GHVDHGKT) are G1. 445–452 (GHVDHGKT) contributes to the GTP binding site. Residues 470-474 (GITQH) are G2. A G3 region spans residues 491–494 (DTPG). Residues 491 to 495 (DTPGH) and 545 to 548 (NKMD) contribute to the GTP site. A G4 region spans residues 545 to 548 (NKMD). The tract at residues 581 to 583 (SAK) is G5.

This sequence belongs to the TRAFAC class translation factor GTPase superfamily. Classic translation factor GTPase family. IF-2 subfamily.

It is found in the cytoplasm. In terms of biological role, one of the essential components for the initiation of protein synthesis. Protects formylmethionyl-tRNA from spontaneous hydrolysis and promotes its binding to the 30S ribosomal subunits. Also involved in the hydrolysis of GTP during the formation of the 70S ribosomal complex. The chain is Translation initiation factor IF-2 from Helicobacter pylori (strain G27).